The primary structure comprises 1336 residues: Probable ATP-dependent DNA helicase HFM1 (1336 aa).

The region spanning 159–347 (EHLLYSDRNF…WLSDENSPGV (189 aa)) is the Helicase ATP-binding domain. An ATP-binding site is contributed by 172 to 179 (APTGSGKT). The DEAH box motif lies at 280–283 (DEVH). The region spanning 388–589 (NIIQTYSDGR…DVKVALEWIR (202 aa)) is the Helicase C-terminal domain. One can recognise an SEC63 domain in the interval 646–961 (PTETGKLMAL…GLDIQQSFNI (316 aa)). The segment at 1016-1031 (CNHNCKNKDACGHECC) adopts a C4-type zinc-finger fold.

Belongs to the helicase family. SKI2 subfamily. The cofactor is Zn(2+).

It catalyses the reaction Couples ATP hydrolysis with the unwinding of duplex DNA by translocating in the 3'-5' direction.. It carries out the reaction ATP + H2O = ADP + phosphate + H(+). In terms of biological role, required for crossover formation and complete synapsis of homologous chromosomes during meiosis. The sequence is that of Probable ATP-dependent DNA helicase HFM1 (hfm1) from Xenopus tropicalis (Western clawed frog).